Here is a 181-residue protein sequence, read N- to C-terminus: Putative ankyrin repeat protein RBE_0150 (181 aa).

4 ANK repeats span residues 50-79 (IGQK…KLGT), 83-114 (LGRT…DINA), 118-147 (SGST…DYFT), and 151-180 (LGQT…AGYY).

The protein is Putative ankyrin repeat protein RBE_0150 of Rickettsia bellii (strain RML369-C).